The sequence spans 412 residues: MQIYIVGGAVRDELLGRPNADCDYVVVGATPETMLAQGFRPVGKDFPVFLHPNTHDEYALARTERKTGHGYHGFIFHAAADVTLEEDLARRDLTINAMAKAADGTLVDPFNGQQDLASKTLRHVGPAFAEDPVRILRIARFAARFSDFSVAPETLALMRSMVACGEVDHLVAERVWQELAKGLMEQKPSRMFEVLRDCGALARLLPEVDKLFGVPQRADYHPEIDTGIHTMMVIDQSARRTFTLPVRFAALTHDLGKAETPADILPRHIGHEERSVRLTEQLCARLRVPNDCRDLALLTARYHGNIHRAADLKASTIVTLFEKTDALRRPERFRQLLDACLCDFTGRLGWENRPYDSPQYLLGALAAVASLNAGEIAVACADKTKIPERIHAARVHAIKQLLDNPGEQPEQQ.

ATP is bound by residues G8 and R11. The CTP site is built by G8 and R11. Mg(2+)-binding residues include D21 and D23. ATP contacts are provided by R91, R137, and R140. The CTP site is built by R91, R137, and R140. The region spanning 226-327 (TGIHTMMVID…VTLFEKTDAL (102 aa)) is the HD domain.

The protein belongs to the tRNA nucleotidyltransferase/poly(A) polymerase family. Bacterial CCA-adding enzyme type 1 subfamily. Monomer. Can also form homodimers and oligomers. The cofactor is Mg(2+). It depends on Ni(2+) as a cofactor.

The catalysed reaction is a tRNA precursor + 2 CTP + ATP = a tRNA with a 3' CCA end + 3 diphosphate. The enzyme catalyses a tRNA with a 3' CCA end + 2 CTP + ATP = a tRNA with a 3' CCACCA end + 3 diphosphate. Its function is as follows. Catalyzes the addition and repair of the essential 3'-terminal CCA sequence in tRNAs without using a nucleic acid template. Adds these three nucleotides in the order of C, C, and A to the tRNA nucleotide-73, using CTP and ATP as substrates and producing inorganic pyrophosphate. tRNA 3'-terminal CCA addition is required both for tRNA processing and repair. Also involved in tRNA surveillance by mediating tandem CCA addition to generate a CCACCA at the 3' terminus of unstable tRNAs. While stable tRNAs receive only 3'-terminal CCA, unstable tRNAs are marked with CCACCA and rapidly degraded. This chain is Multifunctional CCA protein, found in Dechloromonas aromatica (strain RCB).